The sequence spans 597 residues: MAFRVLLLFSLTALLIFSAVSPSFAASSSDDVDDEDLSFLEDLKEDDVPGADSLSSSTGFDEFEGGEEEDPDMYNDDDDEEGDFSDLGNPDSDPLPTPEIDEKDVVVIKERNFTDVIENNQYVLVEFYAPWCGHCQSLAPEYAAAATELKEDGVVLAKIDATEENELAQEYRVQGFPTLLFFVDGEHKPYTGGRTKETIVTWVKKKIGPGVYNLTTLDDAEKVLTSGNKVVLGYLNSLVGVEHDQLNAASKAEDDVNFYQTVNPDVAKMFHLDPESKRPALVLVKKEEEKISHFDGEFVKSALVSFVSANKLALVSVFTRETAPEIFESAIKKQLLLFVTKNESEKVLTEFQEAAKSFKGKLIFVSVDLDNEDYGKPVAEYFGVSGNGPKLIGYTGNEDPKKYFFDGEIQSDKIKIFGEDFLNDKLKPFYKSDPIPEKNDEDVKIVVGDNFDEIVLDDSKDVLLEVYAPWCGHCQALEPMYNKLAKHLRSIDSLVITKMDGTTNEHPKAKAEGFPTILFFPAGNKTSEPITVDTDRTVVAFYKFLRKHATIPFKLEKPASTESPKTAESTPKVETTETKESPDSTTKSSQSDSKDEL.

An N-terminal signal peptide occupies residues Met1–Ala25. Acidic residues-rich tracts occupy residues Leu37–Pro49 and Asp61–Phe84. The segment at Leu37 to Asp101 is disordered. In terms of domain architecture, Thioredoxin 1 spans Ser85–Gly208. N-linked (GlcNAc...) asparagine glycosylation occurs at Asn112. Residues Cys132 and Cys135 each act as nucleophile in the active site. Cys132 and Cys135 are disulfide-bonded. Asn213 and Asn342 each carry an N-linked (GlcNAc...) asparagine glycan. The Thioredoxin 2 domain occupies Phe429 to Thr550. Active-site nucleophile residues include Cys471 and Cys474. A disulfide bridge links Cys471 with Cys474. Asn524 carries an N-linked (GlcNAc...) asparagine glycan. The disordered stretch occupies residues Leu555–Leu597. Polar residues predominate over residues Ser560 to Val573. Residues Lys594–Leu597 carry the Prevents secretion from ER motif.

Belongs to the protein disulfide isomerase family. In terms of assembly, interacts with MEE8 and MED37A. In terms of tissue distribution, expressed in germinating seedling, including the cotyledons and hypocotyl, in vascular tissues, in pollen grains, root tips, leaf trichomes, developing seeds and siliques.

Its subcellular location is the endoplasmic reticulum lumen. The protein localises to the golgi apparatus. It localises to the vacuole. The protein resides in the nucleus. It is found in the secreted. Its subcellular location is the cell wall. The catalysed reaction is Catalyzes the rearrangement of -S-S- bonds in proteins.. Functionally, acts as a protein-folding catalyst that interacts with nascent polypeptides to catalyze the formation, isomerization, and reduction or oxidation of disulfide bonds. This Arabidopsis thaliana (Mouse-ear cress) protein is Protein disulfide isomerase-like 1-4 (PDIL1-4).